The chain runs to 541 residues: Peptide chain release factor 3 (541 aa).

Residues 14 to 283 form the tr-type G domain; that stretch reads EARRNFAIIS…AFLDYALKPG (270 aa). GTP contacts are provided by residues 23-30, 91-95, and 145-148; these read SHPDAGKT, DTPGH, and NKLD.

Belongs to the TRAFAC class translation factor GTPase superfamily. Classic translation factor GTPase family. PrfC subfamily.

It is found in the cytoplasm. In terms of biological role, increases the formation of ribosomal termination complexes and stimulates activities of RF-1 and RF-2. It binds guanine nucleotides and has strong preference for UGA stop codons. It may interact directly with the ribosome. The stimulation of RF-1 and RF-2 is significantly reduced by GTP and GDP, but not by GMP. The protein is Peptide chain release factor 3 of Acaryochloris marina (strain MBIC 11017).